The chain runs to 214 residues: Ribosomal RNA small subunit methyltransferase G (214 aa).

Residues Gly-81, Met-86, 132 to 133 (VE), and Arg-147 each bind S-adenosyl-L-methionine.

It belongs to the methyltransferase superfamily. RNA methyltransferase RsmG family.

It is found in the cytoplasm. It catalyses the reaction guanosine(527) in 16S rRNA + S-adenosyl-L-methionine = N(7)-methylguanosine(527) in 16S rRNA + S-adenosyl-L-homocysteine. In terms of biological role, specifically methylates the N7 position of guanine in position 527 of 16S rRNA. The sequence is that of Ribosomal RNA small subunit methyltransferase G from Pseudomonas paraeruginosa (strain DSM 24068 / PA7) (Pseudomonas aeruginosa (strain PA7)).